A 152-amino-acid polypeptide reads, in one-letter code: MGLFSSINVASTGLTAQRLRIDVISNNIANVSTSRTPDGGPYRRQRIIFAPRVNNPYWKGPFIPDYLDNGIGQGVRVASIEKDKSPLKLKYDPAHPDSISSGDKKGYVELPNVNLVEEMVDMISASRAYEANSTVINSSKSMFRSALAILQG.

Belongs to the flagella basal body rod proteins family. The basal body constitutes a major portion of the flagellar organelle and consists of four rings (L,P,S, and M) mounted on a central rod. The rod consists of about 26 subunits of FlgG in the distal portion, and FlgB, FlgC and FlgF are thought to build up the proximal portion of the rod with about 6 subunits each.

The protein localises to the bacterial flagellum basal body. The polypeptide is Flagellar basal-body rod protein FlgC (flgC) (Borreliella burgdorferi (strain ATCC 35210 / DSM 4680 / CIP 102532 / B31) (Borrelia burgdorferi)).